Here is a 191-residue protein sequence, read N- to C-terminus: Programmed cell death protein 6 (191 aa).

A2 carries the N-acetylalanine modification. EF-hand domains are found at residues 23–58 (PDQS…GTWT), 59–89 (PFNP…TGVW), 90–125 (KYIT…FGYR), 126–161 (LSDQ…LQRL), and 162–191 (TDIF…FSIV). Ca(2+) contacts are provided by D36, D38, S40, V42, and E47. Residues D103, D105, S107, M109, and E114 each coordinate Ca(2+). The Mg(2+) site is built by D169, D171, D173, and W175.

Homodimer and heterodimer; heterodimerizes (via the EF-hand 5) with PEF1. Isoform 1 and isoform 2 self-associate; probably forming homodimers. Interacts with CPNE4 (via VWFA domain). Interacts with PDCD6IP; the interaction is calcium-dependent. Interacts with RBM22. Interacts with PLSCR4. Interacts with ANXA7 and TSG101. Interacts with DAPK1. Interacts with SEC31A; the interaction is calcium-dependent and promotes monoubiquitination of SEC31A. Interacts with ANXA11 (via N-terminus); the interaction is calcium-dependent. Interacts with PLSCR3 (via N-terminus); the interaction is calcium-dependent. Interacts with MCOLN1; the interaction is calcium-dependent. Interacts with KDR; the interaction is calcium-dependent. Interacts with HEBP2; the interaction is calcium-dependent. Interacts with TFG. Isoform 1: Interacts with SHISA5, leading to stabilize it. Isoform 2: Does not interact with SHISA5. Isoform 2: Does not interact with PDCD6IP, TSG101, ANXA7 and ANXA11.

The protein resides in the endoplasmic reticulum membrane. It is found in the cytoplasmic vesicle. Its subcellular location is the COPII-coated vesicle membrane. The protein localises to the cytoplasm. It localises to the nucleus. The protein resides in the endosome. In terms of biological role, calcium sensor that plays a key role in processes such as endoplasmic reticulum (ER)-Golgi vesicular transport, endosomal biogenesis or membrane repair. Acts as an adapter that bridges unrelated proteins or stabilizes weak protein-protein complexes in response to calcium: calcium-binding triggers exposure of apolar surface, promoting interaction with different sets of proteins thanks to 3 different hydrophobic pockets, leading to translocation to membranes. Involved in ER-Golgi transport. Regulates ER-Golgi transport by promoting the association between PDCD6IP and TSG101, thereby bridging together the ESCRT-III and ESCRT-I complexes. Together with PEF1, acts as a calcium-dependent adapter for the BCR(KLHL12) complex, a complex involved in ER-Golgi transport by regulating the size of COPII coats. In response to cytosolic calcium increase, the heterodimer formed with PEF1 interacts with, and bridges together the BCR(KLHL12) complex and SEC31 (SEC31A or SEC31B), promoting monoubiquitination of SEC31 and subsequent collagen export, which is required for neural crest specification. Involved in the regulation of the distribution and function of MCOLN1 in the endosomal pathway. Promotes localization and polymerization of TFG at endoplasmic reticulum exit site. Required for T-cell receptor-, Fas-, and glucocorticoid-induced apoptosis. May mediate Ca(2+)-regulated signals along the death pathway: interaction with DAPK1 can accelerate apoptotic cell death by increasing caspase-3 activity. Its role in apoptosis may however be indirect, as suggested by knockout experiments. May inhibit KDR/VEGFR2-dependent angiogenesis; the function involves inhibition of VEGF-induced phosphorylation of the Akt signaling pathway. Its function is as follows. Has a lower Ca(2+) affinity than isoform 1. The chain is Programmed cell death protein 6 from Rattus norvegicus (Rat).